Here is a 313-residue protein sequence, read N- to C-terminus: tRNA dimethylallyltransferase (313 aa).

10–17 (GPTASGKT) contacts ATP. Position 12–17 (12–17 (TASGKT)) interacts with substrate. Interaction with substrate tRNA stretches follow at residues 35–38 (DSAM), 159–163 (QRIQR), and 240–245 (RCVGYR).

Belongs to the IPP transferase family. Monomer. Mg(2+) serves as cofactor.

It carries out the reaction adenosine(37) in tRNA + dimethylallyl diphosphate = N(6)-dimethylallyladenosine(37) in tRNA + diphosphate. In terms of biological role, catalyzes the transfer of a dimethylallyl group onto the adenine at position 37 in tRNAs that read codons beginning with uridine, leading to the formation of N6-(dimethylallyl)adenosine (i(6)A). This chain is tRNA dimethylallyltransferase, found in Legionella pneumophila (strain Corby).